The primary structure comprises 1128 residues: Phytochrome A (1128 aa).

Positions 1–21 (MSSSRPTQCSSSSSRTRQSSR) are enriched in low complexity. Residues 1-24 (MSSSRPTQCSSSSSRTRQSSRARI) are disordered. The 186-residue stretch at 219–404 (SMEVLCNTVV…VFAVHVNKEF (186 aa)) folds into the GAF domain. Phytochromobilin is bound at residue cysteine 324. PAS domains lie at 620-690 (VTSE…LQGK) and 750-834 (VEGD…LAGD). The Histidine kinase domain maps to 904–1124 (YMRHAINNPL…TFILSVELAS (221 aa)).

Belongs to the phytochrome family. As to quaternary structure, homodimer. Contains one covalently linked phytochromobilin chromophore.

Regulatory photoreceptor which exists in two forms that are reversibly interconvertible by light: the Pr form that absorbs maximally in the red region of the spectrum and the Pfr form that absorbs maximally in the far-red region. Photoconversion of Pr to Pfr induces an array of morphogenic responses, whereas reconversion of Pfr to Pr cancels the induction of those responses. Pfr controls the expression of a number of nuclear genes including those encoding the small subunit of ribulose-bisphosphate carboxylase, chlorophyll A/B binding protein, protochlorophyllide reductase, rRNA, etc. It also controls the expression of its own gene(s) in a negative feedback fashion. The protein is Phytochrome A (PHYA) of Oryza sativa subsp. indica (Rice).